The primary structure comprises 137 residues: ATP synthase epsilon chain, chloroplastic (137 aa).

Belongs to the ATPase epsilon chain family. F-type ATPases have 2 components, CF(1) - the catalytic core - and CF(0) - the membrane proton channel. CF(1) has five subunits: alpha(3), beta(3), gamma(1), delta(1), epsilon(1). CF(0) has three main subunits: a, b and c.

It is found in the plastid. The protein localises to the chloroplast thylakoid membrane. Produces ATP from ADP in the presence of a proton gradient across the membrane. This Agrostis stolonifera (Creeping bentgrass) protein is ATP synthase epsilon chain, chloroplastic.